A 327-amino-acid chain; its full sequence is tRNA U34 carboxymethyltransferase (327 aa).

Residues lysine 91, tryptophan 105, lysine 110, glycine 130, 181 to 182 (IE), methionine 196, tyrosine 200, and arginine 315 each bind carboxy-S-adenosyl-L-methionine.

This sequence belongs to the class I-like SAM-binding methyltransferase superfamily. CmoB family. Homotetramer.

It carries out the reaction carboxy-S-adenosyl-L-methionine + 5-hydroxyuridine(34) in tRNA = 5-carboxymethoxyuridine(34) in tRNA + S-adenosyl-L-homocysteine + H(+). In terms of biological role, catalyzes carboxymethyl transfer from carboxy-S-adenosyl-L-methionine (Cx-SAM) to 5-hydroxyuridine (ho5U) to form 5-carboxymethoxyuridine (cmo5U) at position 34 in tRNAs. In Pectobacterium atrosepticum (strain SCRI 1043 / ATCC BAA-672) (Erwinia carotovora subsp. atroseptica), this protein is tRNA U34 carboxymethyltransferase.